The primary structure comprises 354 residues: cAMP-dependent protein kinase catalytic subunit 2 (354 aa).

Residues 45–301 (YITRAVLGNG…SSDVKSHPWF (257 aa)) enclose the Protein kinase domain. ATP-binding positions include 51–59 (LGNGSFGTV) and K74. Residue D168 is the Proton acceptor of the active site. Positions 302-354 (QGVDWFGILNQEVTAPYQPTISGAEDLSNFENFEFKDRYKSRINRHPELFANF) constitute an AGC-kinase C-terminal domain.

Belongs to the protein kinase superfamily. AGC Ser/Thr protein kinase family. cAMP subfamily. As to expression, more abundant in adult body than adult head.

The enzyme catalyses L-seryl-[protein] + ATP = O-phospho-L-seryl-[protein] + ADP + H(+). It catalyses the reaction L-threonyl-[protein] + ATP = O-phospho-L-threonyl-[protein] + ADP + H(+). The polypeptide is cAMP-dependent protein kinase catalytic subunit 2 (Pka-C2) (Drosophila melanogaster (Fruit fly)).